A 349-amino-acid chain; its full sequence is Threonine-rich protein (349 aa).

The N-terminal stretch at 1–19 is a signal peptide; the sequence is MKGLTLACIAATVVAASHA. Residue Asn-257 is glycosylated (N-linked (GlcNAc...) asparagine). A disordered region spans residues 300 to 326; it reads QPDVSPMSVRKRRQAESAEEDDDLVGD. A compositionally biased stretch (acidic residues) spans 316–326; that stretch reads SAEEDDDLVGD. Residues 316-349 adopt a coiled-coil conformation; the sequence is SAEEDDDLVGDMEDLKELEQEIQEALEEVEKLDV.

As to expression, component of the acid-insoluble and acid-soluble organic matrix of calcified layers of the shell (at protein level).

It localises to the secreted. This chain is Threonine-rich protein, found in Lottia gigantea (Giant owl limpet).